The primary structure comprises 85 residues: Small ribosomal subunit protein bS18 (85 aa).

It belongs to the bacterial ribosomal protein bS18 family. In terms of assembly, part of the 30S ribosomal subunit. Forms a tight heterodimer with protein bS6.

In terms of biological role, binds as a heterodimer with protein bS6 to the central domain of the 16S rRNA, where it helps stabilize the platform of the 30S subunit. The polypeptide is Small ribosomal subunit protein bS18 (Helicobacter acinonychis (strain Sheeba)).